A 482-amino-acid polypeptide reads, in one-letter code: tRNA sulfurtransferase (482 aa).

The THUMP domain maps to 61–165 (LAIRDALTRI…DDRLLLIKGR (105 aa)). ATP is bound by residues 183-184 (LI), Lys265, Gly287, and Gln296. A disulfide bond links Cys344 and Cys456. In terms of domain architecture, Rhodanese spans 404-482 (FGPNDVILDI…GFNNVKVYRP (79 aa)). Catalysis depends on Cys456, which acts as the Cysteine persulfide intermediate.

It belongs to the ThiI family.

Its subcellular location is the cytoplasm. The enzyme catalyses [ThiI sulfur-carrier protein]-S-sulfanyl-L-cysteine + a uridine in tRNA + 2 reduced [2Fe-2S]-[ferredoxin] + ATP + H(+) = [ThiI sulfur-carrier protein]-L-cysteine + a 4-thiouridine in tRNA + 2 oxidized [2Fe-2S]-[ferredoxin] + AMP + diphosphate. It carries out the reaction [ThiS sulfur-carrier protein]-C-terminal Gly-Gly-AMP + S-sulfanyl-L-cysteinyl-[cysteine desulfurase] + AH2 = [ThiS sulfur-carrier protein]-C-terminal-Gly-aminoethanethioate + L-cysteinyl-[cysteine desulfurase] + A + AMP + 2 H(+). The protein operates within cofactor biosynthesis; thiamine diphosphate biosynthesis. Catalyzes the ATP-dependent transfer of a sulfur to tRNA to produce 4-thiouridine in position 8 of tRNAs, which functions as a near-UV photosensor. Also catalyzes the transfer of sulfur to the sulfur carrier protein ThiS, forming ThiS-thiocarboxylate. This is a step in the synthesis of thiazole, in the thiamine biosynthesis pathway. The sulfur is donated as persulfide by IscS. In Shigella sonnei (strain Ss046), this protein is tRNA sulfurtransferase.